The chain runs to 278 residues: Ubiquinone biosynthesis protein COQ4, mitochondrial (278 aa).

The transit peptide at 1–28 (MATPTSVRIAGFRSLQALCAQRTVTRNF) directs the protein to the mitochondrion. Residues His-164, Asp-165, His-168, and Glu-180 each contribute to the Zn(2+) site.

Belongs to the COQ4 family. In terms of assembly, component of a multi-subunit COQ enzyme complex, composed of at least COQ3, COQ4, COQ5, COQ6, COQ7 and COQ9. It depends on Zn(2+) as a cofactor.

The protein resides in the mitochondrion inner membrane. The catalysed reaction is a 4-hydroxy-3-methoxy-5-(all-trans-polyprenyl)benzoate + H(+) = a 2-methoxy-6-(all-trans-polyprenyl)phenol + CO2. It functions in the pathway cofactor biosynthesis; ubiquinone biosynthesis. In terms of biological role, lyase that catalyzes the C1-decarboxylation of 4-hydroxy-3-methoxy-5-(all-trans-polyprenyl)benzoic acid into 2-methoxy-6-(all-trans-polyprenyl)phenol during ubiquinone biosynthesis. The chain is Ubiquinone biosynthesis protein COQ4, mitochondrial from Uncinocarpus reesii (strain UAMH 1704).